The following is a 289-amino-acid chain: NADPH-dependent 7-cyano-7-deazaguanine reductase (289 aa).

81–83 (IES) provides a ligand contact to substrate. 83–84 (SK) is a binding site for NADPH. Catalysis depends on C196, which acts as the Thioimide intermediate. The active-site Proton donor is the D203. Residue 235–236 (HE) participates in substrate binding. 264–265 (RG) contacts NADPH.

This sequence belongs to the GTP cyclohydrolase I family. QueF type 2 subfamily. In terms of assembly, homodimer.

It is found in the cytoplasm. It carries out the reaction 7-aminomethyl-7-carbaguanine + 2 NADP(+) = 7-cyano-7-deazaguanine + 2 NADPH + 3 H(+). It participates in tRNA modification; tRNA-queuosine biosynthesis. Functionally, catalyzes the NADPH-dependent reduction of 7-cyano-7-deazaguanine (preQ0) to 7-aminomethyl-7-deazaguanine (preQ1). This chain is NADPH-dependent 7-cyano-7-deazaguanine reductase, found in Albidiferax ferrireducens (strain ATCC BAA-621 / DSM 15236 / T118) (Rhodoferax ferrireducens).